The chain runs to 279 residues: Pantothenate synthetase (279 aa).

Residue 26-33 participates in ATP binding; the sequence is MGNLHDGH. The active-site Proton donor is H33. Q57 is a binding site for (R)-pantoate. Q57 is a beta-alanine binding site. Residue 144 to 147 coordinates ATP; it reads GKKD. Q150 is a (R)-pantoate binding site. Residue 181-184 participates in ATP binding; that stretch reads LSSR.

Belongs to the pantothenate synthetase family. As to quaternary structure, homodimer.

Its subcellular location is the cytoplasm. It catalyses the reaction (R)-pantoate + beta-alanine + ATP = (R)-pantothenate + AMP + diphosphate + H(+). Its pathway is cofactor biosynthesis; (R)-pantothenate biosynthesis; (R)-pantothenate from (R)-pantoate and beta-alanine: step 1/1. Its function is as follows. Catalyzes the condensation of pantoate with beta-alanine in an ATP-dependent reaction via a pantoyl-adenylate intermediate. This Herminiimonas arsenicoxydans protein is Pantothenate synthetase.